The sequence spans 123 residues: Ribosome-binding factor A (123 aa).

Belongs to the RbfA family. In terms of assembly, monomer. Binds 30S ribosomal subunits, but not 50S ribosomal subunits or 70S ribosomes.

It is found in the cytoplasm. One of several proteins that assist in the late maturation steps of the functional core of the 30S ribosomal subunit. Associates with free 30S ribosomal subunits (but not with 30S subunits that are part of 70S ribosomes or polysomes). Required for efficient processing of 16S rRNA. May interact with the 5'-terminal helix region of 16S rRNA. This Lactobacillus gasseri (strain ATCC 33323 / DSM 20243 / BCRC 14619 / CIP 102991 / JCM 1131 / KCTC 3163 / NCIMB 11718 / NCTC 13722 / AM63) protein is Ribosome-binding factor A.